The chain runs to 75 residues: Small ribosomal subunit protein eS28 (75 aa).

It belongs to the eukaryotic ribosomal protein eS28 family.

This Natronomonas pharaonis (strain ATCC 35678 / DSM 2160 / CIP 103997 / JCM 8858 / NBRC 14720 / NCIMB 2260 / Gabara) (Halobacterium pharaonis) protein is Small ribosomal subunit protein eS28.